The primary structure comprises 444 residues: Gustatory receptor 5a for trehalose (444 aa).

Residues 1–56 (MRQLKGRNRCNRAVRHLKIQGKMWLKNLKSGLEQIRESQVRGTRKNFLHDGSFHEA) lie on the Cytoplasmic side of the membrane. Residues 57 to 77 (VAPVLAVAQCFCLMPVCGISA) form a helical membrane-spanning segment. Residues 78-178 (PTYRGLSFNR…RARPARRLKL (101 aa)) are Extracellular-facing. A helical membrane pass occupies residues 179–199 (VAFVLLVVSLMEHLLSIISVV). Topologically, residues 200–214 (YYDFCPRRSDPVESY) are cytoplasmic. The helical transmembrane segment at 215 to 235 (LLGASAQLFEVFPYSNWLAWL) threads the bilayer. The Extracellular segment spans residues 236–240 (GKIQN). A helical transmembrane segment spans residues 241 to 261 (VLLTFGWSYMDIFLMMLGMGL). At 262 to 305 (SEMLARLNRSLEQQVRQPMPEAYWTWSRTLYRSIVELIREVDDA) the chain is on the cytoplasmic side. A helical membrane pass occupies residues 306–326 (VSGIMLISFGSNLYFICLQLL). The Extracellular segment spans residues 327–338 (KSINTMPSSAHA). A helical transmembrane segment spans residues 339 to 359 (VYFYFSLLFLLSRSTAVLLFV). Residues 360–410 (SAINDQAREPLRLLRLVPLKGYHPEVFRFAAELASDQVALTGLKFFNVTRK) lie on the Cytoplasmic side of the membrane. The chain crosses the membrane as a helical span at residues 411–431 (LFLAMAGTVATYELVLIQFHE). At 432–444 (DKKTWDCSPFNLD) the chain is on the extracellular side.

The protein belongs to the insect chemoreceptor superfamily. Gustatory receptor (GR) family. Gr5a subfamily. In terms of tissue distribution, expressed in labellar chemosensory neurons.

It is found in the cell membrane. Gustatory receptor required for response to the sugar trehalose in taste neurons. Gr5a neurons selectively respond to sugars, in contrast to Gr66a cells which respond to bitter compounds. Flies are attracted to sugars and avoid bitter substances, suggesting that Gr5a neuron activity is sufficient to mediate acceptance behavior. Sugar signal transduction occurs through coupling with G-proteins such as Galpha49B and G-salpha60A. The sequence is that of Gustatory receptor 5a for trehalose (Gr5a) from Drosophila melanogaster (Fruit fly).